Reading from the N-terminus, the 405-residue chain is Pre-mRNA-splicing factor cwc-24 (405 aa).

Disordered regions lie at residues 1 to 114 and 162 to 184; these read MADT…NTIY and TKKK…DGTY. Residues 15 to 29 show a composition bias toward low complexity; the sequence is EPTTATPTAPIAPVA. Basic residues predominate over residues 31–46; it reads FKKRGAKGKANLRKRP. The span at 56 to 70 shows a compositional bias: acidic residues; it reads SDDDSSDFESSEDEA. Positions 74 to 83 are enriched in basic residues; that stretch reads RIKRRKKNHH. The C3H1-type zinc finger occupies 221-249; that stretch reads DMAPDVCKDYKQTGFCGFGDNCKFLHARE. The RING-type zinc-finger motif lies at 310-349; it reads CIICRGPYSNSPVVTRCGHYFCEACALKRYRKDPSCAACG. Residues 370–386 show a composition bias toward basic and acidic residues; that stretch reads KARAERLRREARERGEE. A disordered region spans residues 370 to 405; it reads KARAERLRREARERGEEVSEEEDEGEDEGEGAEGSD. Residues 387–405 are compositionally biased toward acidic residues; sequence VSEEEDEGEDEGEGAEGSD.

Belongs to the CWC24 family. Associated with the spliceosome.

The protein localises to the nucleus. In terms of biological role, involved in pre-mRNA splicing. This Neurospora crassa (strain ATCC 24698 / 74-OR23-1A / CBS 708.71 / DSM 1257 / FGSC 987) protein is Pre-mRNA-splicing factor cwc-24 (cwc-24).